A 121-amino-acid polypeptide reads, in one-letter code: Fluoride-specific ion channel FluC 1 (121 aa).

A run of 4 helical transmembrane segments spans residues Tyr-3–Leu-23, Val-35–Phe-55, Ala-64–Ile-84, and Phe-92–Val-112. Na(+) is bound by residues Gly-71 and Thr-74.

This sequence belongs to the fluoride channel Fluc/FEX (TC 1.A.43) family.

It localises to the cell membrane. The catalysed reaction is fluoride(in) = fluoride(out). With respect to regulation, na(+) is not transported, but it plays an essential structural role and its presence is essential for fluoride channel function. Functionally, fluoride-specific ion channel. Important for reducing fluoride concentration in the cell, thus reducing its toxicity. This is Fluoride-specific ion channel FluC 1 from Staphylococcus aureus (strain bovine RF122 / ET3-1).